A 255-amino-acid chain; its full sequence is Hydroxyacylglutathione hydrolase (255 aa).

Residues His56, His58, Asp60, His61, His114, Asp133, and His171 each contribute to the Zn(2+) site.

It belongs to the metallo-beta-lactamase superfamily. Glyoxalase II family. Monomer. Zn(2+) serves as cofactor.

It carries out the reaction an S-(2-hydroxyacyl)glutathione + H2O = a 2-hydroxy carboxylate + glutathione + H(+). It participates in secondary metabolite metabolism; methylglyoxal degradation; (R)-lactate from methylglyoxal: step 2/2. Functionally, thiolesterase that catalyzes the hydrolysis of S-D-lactoyl-glutathione to form glutathione and D-lactic acid. This Nitrobacter winogradskyi (strain ATCC 25391 / DSM 10237 / CIP 104748 / NCIMB 11846 / Nb-255) protein is Hydroxyacylglutathione hydrolase.